The primary structure comprises 453 residues: uncharacterized protein (453 aa).

Residues 1-110 are Cytoplasmic-facing; sequence MIQTQSTAIK…KAILRTFNHP (110 aa). A helical transmembrane segment spans residues 111–131; it reads IALTELQFLVSAVLCVGFASI. Over 132-172 the chain is Lumenal; the sequence is VNLFRLPRLKHTKFSKALNSFPDGILPEYLDGNFRSSILHK. Residues 173 to 193 traverse the membrane as a helical segment; sequence FLVPSKLVLMTTFPMGIFQFI. The Cytoplasmic portion of the chain corresponds to 194-201; sequence GHITSHKA. Residues 202–222 traverse the membrane as a helical segment; sequence VSMIPVSLVHSVKALSPIITV. Over 223 to 234 the chain is Lumenal; the sequence is GYYKFFEHRYYN. A helical membrane pass occupies residues 235–255; that stretch reads SMTYYTLLLLIFGVMTTCWST. The Cytoplasmic portion of the chain corresponds to 256-269; that stretch reads HGSKRASDNKSGSS. Residues 270–290 form a helical membrane-spanning segment; the sequence is LIGLLFAFISMIIFVAQNIFA. Residues 291–332 lie on the Lumenal side of the membrane; the sequence is KNILTIRRKVGILPSSSTDDVTSKEGQPSLDKTRFSPLQVDK. A helical transmembrane segment spans residues 333 to 353; sequence ITILFYCSCIGFSLTLLPFLT. Over 354–371 the chain is Cytoplasmic; sequence GELMHGGSVINDLTLETV. The helical transmembrane segment at 372-392 threads the bilayer; it reads ALVAIHGIAHFFQAMLAFQLI. Over 393–413 the chain is Lumenal; sequence GLLSSINYSVANIMKRIVVIS. Residues 414 to 434 form a helical membrane-spanning segment; it reads VALFWETKLNFFQVFGVILTI. At 435–453 the chain is on the cytoplasmic side; the sequence is AGLYGYDKWGLSKKDGRQA.

It belongs to the TPT transporter family.

It is found in the membrane. In terms of biological role, able to suppress the functional loss of YPT1. May form a channel. Protein SLY41 is not essential for cell viability. The SLY41 gene is a multicopy suppressor. This is an uncharacterized protein from Saccharomyces cerevisiae (strain ATCC 204508 / S288c) (Baker's yeast).